The primary structure comprises 336 residues: SKRKAPQESLNEGITDFLVELANYERNVNRAIHKYNAYRKAASVIAKYPQKIKSGTEAKKLDGVGAKIAEKIDEFLTTGKLRKLEKIRNDDTSSSINFLTRVTGIGPAAARKFFDEGVRNLEDLKKIEHKLNHHQQIGLKYFEEFEKRIPRSEMQKMEALILKELDIVDPEYIGTICGSYRRGAESSGDIDILLTHPDFTSQSEKQPKLLHAVVDHLESIGFITDTLSKGDTKFMGVCQLQKEKEEEEEESLHRRIDIRLIPKDQYYCGVLYFTGSDIFNKNMRTHALEKGFTLNEYTIRPLGVTGVAGEPLLVDSEKDIFEYIQWKYREPKDRSE.

Residues lysine 59, leucine 61, and valine 64 each contribute to the K(+) site. Na(+)-binding residues include lysine 59, leucine 61, and valine 64. The Nucleophile; Schiff-base intermediate with DNA; for 5'-dRP lyase activity role is filled by lysine 71. Residue arginine 82 is modified to Omega-N-methylarginine; by PRMT6. Residues threonine 100, valine 102, and isoleucine 105 each contribute to the K(+) site. 3 residues coordinate Na(+): threonine 100, valine 102, and isoleucine 105. Residue arginine 148 coordinates a 2'-deoxyribonucleoside 5'-triphosphate. Omega-N-methylarginine; by PRMT6 is present on arginine 151. Residues serine 179, arginine 182, glycine 188, and aspartate 189 each coordinate a 2'-deoxyribonucleoside 5'-triphosphate. A DNA-binding region spans residues 182-191; sequence RGAESSGDID. Aspartate 189, aspartate 191, and aspartate 257 together coordinate Mg(2+).

Belongs to the DNA polymerase type-X family. Mg(2+) is required as a cofactor. Methylation by PRMT6 stimulates the polymerase activity by enhancing DNA binding and processivity. In terms of processing, ubiquitinated: monoubiquitinated by huwe1/arf-bp1. Monoubiquitinated protein is then the target of stub1/chip, which catalyzes polyubiquitination from monoubiquitin, leading to degradation by the proteasome. usp47 mediates the deubiquitination of monoubiquitinated protein, preventing polyubiquitination by STUB1/CHIP and its subsequent degradation.

The protein localises to the nucleus. It localises to the cytoplasm. It catalyses the reaction DNA(n) + a 2'-deoxyribonucleoside 5'-triphosphate = DNA(n+1) + diphosphate. It carries out the reaction a 5'-end 2'-deoxyribose-2'-deoxyribonucleotide-DNA = (2E,4S)-4-hydroxypenten-2-al-5-phosphate + a 5'-end 5'-phospho-2'-deoxyribonucleoside-DNA + H(+). The enzyme catalyses 2'-deoxyribonucleotide-(2'-deoxyribose 5'-phosphate)-2'-deoxyribonucleotide-DNA = a 3'-end 2'-deoxyribonucleotide-(2,3-dehydro-2,3-deoxyribose 5'-phosphate)-DNA + a 5'-end 5'-phospho-2'-deoxyribonucleoside-DNA + H(+). Functionally, repair polymerase that plays a key role in base-excision repair. During this process, the damaged base is excised by specific DNA glycosylases, the DNA backbone is nicked at the abasic site by an apurinic/apyrimidic (AP) endonuclease, and POLB removes 5'-deoxyribose-phosphate from the preincised AP site acting as a 5'-deoxyribose-phosphate lyase (5'-dRP lyase); through its DNA polymerase activity, it adds one nucleotide to the 3' end of the arising single-nucleotide gap. Conducts 'gap-filling' DNA synthesis in a stepwise distributive fashion rather than in a processive fashion as for other DNA polymerases. It is also able to cleave sugar-phosphate bonds 3' to an intact AP site, acting as an AP lyase. The polypeptide is DNA polymerase beta (polb) (Danio rerio (Zebrafish)).